A 39-amino-acid polypeptide reads, in one-letter code: MTRTAVLLLTLLFLVAMAASDKIKTRELCWTEEECENWE.

Positions 1–20 (MTRTAVLLLTLLFLVAMAAS) are cleaved as a signal peptide. A disulfide bond links Cys-29 and Cys-35.

Expressed by the venom duct.

The protein resides in the secreted. Functionally, probable neurotoxin. The sequence is that of Contryphan-Cal2 from Californiconus californicus (California cone).